Consider the following 329-residue polypeptide: Glycerol-3-phosphate dehydrogenase [NAD(P)+] (329 aa).

NADPH contacts are provided by Trp15, His35, and Lys107. Positions 107, 135, and 137 each coordinate sn-glycerol 3-phosphate. Residue Ala139 participates in NADPH binding. The sn-glycerol 3-phosphate site is built by Lys190, Asp243, Ser253, Arg254, and Asn255. Catalysis depends on Lys190, which acts as the Proton acceptor. Arg254 contributes to the NADPH binding site. NADPH-binding residues include Leu276 and Glu278.

It belongs to the NAD-dependent glycerol-3-phosphate dehydrogenase family.

It is found in the cytoplasm. The catalysed reaction is sn-glycerol 3-phosphate + NAD(+) = dihydroxyacetone phosphate + NADH + H(+). The enzyme catalyses sn-glycerol 3-phosphate + NADP(+) = dihydroxyacetone phosphate + NADPH + H(+). The protein operates within membrane lipid metabolism; glycerophospholipid metabolism. Catalyzes the reduction of the glycolytic intermediate dihydroxyacetone phosphate (DHAP) to sn-glycerol 3-phosphate (G3P), the key precursor for phospholipid synthesis. The protein is Glycerol-3-phosphate dehydrogenase [NAD(P)+] of Rhodopseudomonas palustris (strain BisB5).